A 374-amino-acid polypeptide reads, in one-letter code: DNA replication and repair protein RecF (374 aa).

34 to 41 (GDNGAGKT) contributes to the ATP binding site.

Belongs to the RecF family.

The protein localises to the cytoplasm. Functionally, the RecF protein is involved in DNA metabolism; it is required for DNA replication and normal SOS inducibility. RecF binds preferentially to single-stranded, linear DNA. It also seems to bind ATP. The protein is DNA replication and repair protein RecF of Rhizobium leguminosarum bv. trifolii (strain WSM2304).